Reading from the N-terminus, the 906-residue chain is Putative disease resistance protein At1g59780 (906 aa).

Positions 20–59 form a coiled coil; sequence KLLSQEYERFQGVEEQITELRDDLKMLMAFLSDADAKKQT. An NB-ARC domain is found at 138 to 452; the sequence is SHAQLERKRE…AEGITYPGNY (315 aa). 187-194 provides a ligand contact to ATP; the sequence is GLGGLGKT. LRR repeat units follow at residues 572-597, 599-619, 620-644, and 825-850; these read LPLLRVLDLDGAKFKGGKLPSSIGKL, HLKYLSLYQASVTYLPSSLRN, LKSLLYLNLRINSGQLINVPNVFKE, and MPLLHTLHIVDCKKLKEIPDGLRFIS.

Belongs to the disease resistance NB-LRR family.

In terms of biological role, potential disease resistance protein. This Arabidopsis thaliana (Mouse-ear cress) protein is Putative disease resistance protein At1g59780.